Reading from the N-terminus, the 191-residue chain is Thymidine kinase (191 aa).

ATP contacts are provided by residues 9–16 and 85–88; these read GSMNSGKT and DESQ. The active-site Proton acceptor is E86. Zn(2+) contacts are provided by C143, C146, C181, and C184.

Belongs to the thymidine kinase family. In terms of assembly, homotetramer.

The protein resides in the cytoplasm. The catalysed reaction is thymidine + ATP = dTMP + ADP + H(+). This is Thymidine kinase from Listeria monocytogenes serotype 4b (strain F2365).